A 357-amino-acid chain; its full sequence is Retinoic acid-induced protein 3 (357 aa).

The Extracellular portion of the chain corresponds to 1-33; it reads MATTVPDGCRNGLKSKYYRLCDKAEAWGIVLET. Residues 34 to 54 form a helical membrane-spanning segment; the sequence is VATAGVVTSVAFMLTLPILVC. At 55–68 the chain is on the cytoplasmic side; that stretch reads KVQDSNRRKMLPTQ. The chain crosses the membrane as a helical span at residues 69 to 89; it reads FLFLLGVLGIFGLTFAFIIGL. Residues 90 to 97 are Extracellular-facing; sequence DGSTGPTR. A helical transmembrane segment spans residues 98–118; it reads FFLFGILFSICFSCLLAHAVS. Topologically, residues 119–129 are cytoplasmic; that stretch reads LTKLVRGRKPL. Residues 130 to 150 form a helical membrane-spanning segment; the sequence is SLLVILGLAVGFSLVQDVIAI. The Extracellular segment spans residues 151–176; the sequence is EYIVLTMNRTNVNVFSELSAPRRNED. N-linked (GlcNAc...) asparagine glycosylation occurs at Asn-158. Residues 177–197 form a helical membrane-spanning segment; that stretch reads FVLLLTYVLFLMALTFLMSSF. Topologically, residues 198-212 are cytoplasmic; the sequence is TFCGSFTGWKRHGAH. Residues 213 to 233 traverse the membrane as a helical segment; that stretch reads IYLTMLLSIAIWVAWITLLML. The Extracellular segment spans residues 234–247; that stretch reads PDFDRRWDDTILSS. The helical transmembrane segment at 248-268 threads the bilayer; the sequence is ALAANGWVFLLAYVSPEFWLL. The Cytoplasmic segment spans residues 269 to 357; that stretch reads TKQRNPMDYP…KDYEVKKEGS (89 aa). The residue at position 301 (Ser-301) is a Phosphoserine. Tyr-317 and Tyr-320 each carry phosphotyrosine. Ser-345 carries the post-translational modification Phosphoserine. Phosphotyrosine is present on residues Tyr-347 and Tyr-350.

The protein belongs to the G-protein coupled receptor 3 family. Interacts (via its transmembrane domain) with EGFR. Post-translationally, phosphorylated in two conserved double-tyrosine motifs, Tyr-317/Tyr-320 and Tyr-347/Tyr-350, by EGFR; leading to inactivation of the tumor suppressive function of GPRC5A in lung cancer cells. Tyr-317 and Tyr-320 are the preferred residues responsible for EGFR-mediated GPRC5A phosphorylation. As to expression, expressed at high level in fetal and adult lung tissues but repressed in most human lung cancers. Constitutively expressed in fetal kidney and adult placenta, kidney, prostate, testis, ovary, small intestine, colon, stomach, and spinal cord at low to moderate levels. Not detectable in fetal heart, brain, and liver and adult heart, brain, liver, skeletal muscle, pancreas, spleen, thymus, and peripheral leukocytes. According to PubMed:10783259, expressed at low but detectable level in pancreas and heart.

The protein localises to the cell membrane. It is found in the cytoplasmic vesicle membrane. Orphan receptor. Could be involved in modulating differentiation and maintaining homeostasis of epithelial cells. This retinoic acid-inducible GPCR provide evidence for a possible interaction between retinoid and G-protein signaling pathways. Functions as a negative modulator of EGFR signaling. May act as a lung tumor suppressor. The polypeptide is Retinoic acid-induced protein 3 (GPRC5A) (Homo sapiens (Human)).